The primary structure comprises 533 residues: 2-isopropylmalate synthase (533 aa).

The 262-residue stretch at 8-269 folds into the Pyruvate carboxyltransferase domain; that stretch reads IIIFDTTLRD…YYNPFLGRPA (262 aa). Positions 17, 208, 210, and 244 each coordinate Mn(2+). The interval 408 to 533 is regulatory domain; sequence RLELVQVSCG…VSANPAKASL (126 aa).

It belongs to the alpha-IPM synthase/homocitrate synthase family. LeuA type 1 subfamily. As to quaternary structure, homodimer. Mn(2+) is required as a cofactor.

It is found in the cytoplasm. The enzyme catalyses 3-methyl-2-oxobutanoate + acetyl-CoA + H2O = (2S)-2-isopropylmalate + CoA + H(+). Its pathway is amino-acid biosynthesis; L-leucine biosynthesis; L-leucine from 3-methyl-2-oxobutanoate: step 1/4. Catalyzes the condensation of the acetyl group of acetyl-CoA with 3-methyl-2-oxobutanoate (2-ketoisovalerate) to form 3-carboxy-3-hydroxy-4-methylpentanoate (2-isopropylmalate). This chain is 2-isopropylmalate synthase, found in Picosynechococcus sp. (strain ATCC 27264 / PCC 7002 / PR-6) (Agmenellum quadruplicatum).